Here is a 302-residue protein sequence, read N- to C-terminus: MAGRELSHLQQLEAESIQIIREVAAEFDNPVMLYSIGKDSSVMLHLARKAFYPGKIPFPLLHVDTGWKFKEMIAFRDAQAKKFGFELLTHTNPEGVAQGINPFDHGSAKHTDIMKTQGLKQALNQYGFDAAFGGARRDEEKSRAKERVYSFRDRHHRWDPKNQRPELWRTYNGAVNKGESIRVFPLSNWTELDIWQYIYQENIELVPLYFAAERPVVERAGQLIMADDERMKLEEGEAIKYEVVRFRTLGCYPLTAAMHSQADNLEKIIEEMLLTRSSERQGRLIDSDQSASMEQKKRQGYF.

A disordered region spans residues 280-302 (RQGRLIDSDQSASMEQKKRQGYF).

It belongs to the PAPS reductase family. CysD subfamily. Heterodimer composed of CysD, the smaller subunit, and CysN.

The enzyme catalyses sulfate + ATP + H(+) = adenosine 5'-phosphosulfate + diphosphate. It participates in sulfur metabolism; hydrogen sulfide biosynthesis; sulfite from sulfate: step 1/3. In terms of biological role, with CysN forms the ATP sulfurylase (ATPS) that catalyzes the adenylation of sulfate producing adenosine 5'-phosphosulfate (APS) and diphosphate, the first enzymatic step in sulfur assimilation pathway. APS synthesis involves the formation of a high-energy phosphoric-sulfuric acid anhydride bond driven by GTP hydrolysis by CysN coupled to ATP hydrolysis by CysD. This chain is Sulfate adenylyltransferase subunit 2, found in Shewanella oneidensis (strain ATCC 700550 / JCM 31522 / CIP 106686 / LMG 19005 / NCIMB 14063 / MR-1).